Consider the following 821-residue polypeptide: Serine/threonine-protein kinase RAD53 (821 aa).

A Phosphoserine modification is found at Ser-24. Positions 66 to 116 (WTFGRNPACDYHLGNISRLSNKHFQILLGEDGNLLLNDISTNGTWLNGQKV) constitute an FHA 1 domain. Ser-175 carries the post-translational modification Phosphoserine. Residues 198-466 (SIIDEVVGQG…AAKALNHPWI (269 aa)) enclose the Protein kinase domain. ATP is bound by residues 204 to 212 (VGQGAFATV) and Lys-227. Asp-319 (proton acceptor) is an active-site residue. Ser-547 and Ser-560 each carry phosphoserine. The FHA 2 domain maps to 601–664 (FFIGRSEDCN…NVSYLNNNRM (64 aa)). The segment at 735-770 (AAQRANQPSASSSSMSAKKPPVSDTNNNGNNSVLND) is disordered. Low complexity predominate over residues 742–770 (PSASSSSMSAKKPPVSDTNNNGNNSVLND). Ser-774 and Ser-793 each carry phosphoserine. The disordered stretch occupies residues 791–821 (SLSQSQIDPSKKVKRAKLDQTSKGPENLQFS). Residues 809-821 (DQTSKGPENLQFS) are compositionally biased toward polar residues.

This sequence belongs to the protein kinase superfamily. CAMK Ser/Thr protein kinase family. CHEK2 subfamily. Interacts (via domain FHA 1) with PTC2 (when phosphorylated); the interaction is direct and serves to regulate DNA damage checkpoint signaling. Interacts with PIN4. Autophosphorylated. Phosphorylated in response to DNA double-strand breaks; dephosphorylation is mediated by PTC2 and PTC3.

It localises to the nucleus. The catalysed reaction is L-seryl-[protein] + ATP = O-phospho-L-seryl-[protein] + ADP + H(+). The enzyme catalyses L-threonyl-[protein] + ATP = O-phospho-L-threonyl-[protein] + ADP + H(+). It carries out the reaction L-tyrosyl-[protein] + ATP = O-phospho-L-tyrosyl-[protein] + ADP + H(+). Its activity is regulated as follows. Inactivated by dephosphorylation via recruitment of PTC2. In terms of biological role, controls S-phase checkpoint as well as G1 and G2 DNA damage checkpoints. Phosphorylates proteins on serine, threonine, and tyrosine. Prevents entry into anaphase and mitotic exit after DNA damage via regulation of the Polo kinase CDC5. Seems to be involved in the phosphorylation of RPH1. The protein is Serine/threonine-protein kinase RAD53 (RAD53) of Saccharomyces cerevisiae (strain ATCC 204508 / S288c) (Baker's yeast).